Consider the following 251-residue polypeptide: 1-(5-phosphoribosyl)-5-[(5-phosphoribosylamino)methylideneamino] imidazole-4-carboxamide isomerase (251 aa).

The active-site Proton acceptor is aspartate 7. Aspartate 131 serves as the catalytic Proton donor.

Belongs to the HisA/HisF family.

Its subcellular location is the cytoplasm. It carries out the reaction 1-(5-phospho-beta-D-ribosyl)-5-[(5-phospho-beta-D-ribosylamino)methylideneamino]imidazole-4-carboxamide = 5-[(5-phospho-1-deoxy-D-ribulos-1-ylimino)methylamino]-1-(5-phospho-beta-D-ribosyl)imidazole-4-carboxamide. Its pathway is amino-acid biosynthesis; L-histidine biosynthesis; L-histidine from 5-phospho-alpha-D-ribose 1-diphosphate: step 4/9. The polypeptide is 1-(5-phosphoribosyl)-5-[(5-phosphoribosylamino)methylideneamino] imidazole-4-carboxamide isomerase (Blochmanniella floridana).